Reading from the N-terminus, the 438-residue chain is Transcription termination factor Rho (438 aa).

The region spanning 70–145 (YILFTGILEI…LKIEAINYLP (76 aa)) is the Rho RNA-BD domain. ATP-binding positions include 188 to 193 (GKGQRA), 200 to 205 (RTGKTE), and R231.

The protein belongs to the Rho family. In terms of assembly, homohexamer. The homohexamer assembles into an open ring structure.

In terms of biological role, facilitates transcription termination by a mechanism that involves Rho binding to the nascent RNA, activation of Rho's RNA-dependent ATPase activity, and release of the mRNA from the DNA template. In Helicobacter pylori (strain J99 / ATCC 700824) (Campylobacter pylori J99), this protein is Transcription termination factor Rho.